The following is a 68-amino-acid chain: Large ribosomal subunit protein uL30 (68 aa).

The protein belongs to the universal ribosomal protein uL30 family. In terms of assembly, part of the 50S ribosomal subunit.

In Pseudarthrobacter chlorophenolicus (strain ATCC 700700 / DSM 12829 / CIP 107037 / JCM 12360 / KCTC 9906 / NCIMB 13794 / A6) (Arthrobacter chlorophenolicus), this protein is Large ribosomal subunit protein uL30.